We begin with the raw amino-acid sequence, 616 residues long: Cleavage stimulation factor subunit 2 tau variant (616 aa).

An RRM domain is found at 16–94 (RSVFVGNIPY…RALRVDNAAS (79 aa)). Disordered regions lie at residues 203–241 (GKSQ…QPQH) and 262–418 (IPAP…SRAM). Composition is skewed to low complexity over residues 223-233 (PGPNVLLNQQN) and 319-331 (VTPG…GLLG). Thr320 bears the Phosphothreonine mark. Positions 368–381 (SGHDTRGPSSHEMR) are enriched in basic and acidic residues. Residues 418–422 (METRA) form a 1-1 repeat. Residues 418-462 (METRAMETEVLETRVMERRGMETCAMETRGMEARGMDARGLEMRG) are 9 X 5 AA tandem repeats of M-E-T-R-[AG]. Residues 423–427 (METEV) form a 1-2; approximate repeat. Residues 428-432 (LETRV) form a 1-3; approximate repeat. The 1-4; approximate repeat unit spans residues 433-437 (MERRG). The 1-5; approximate repeat unit spans residues 438 to 442 (METCA). The 1-6 repeat unit spans residues 443–447 (METRG). Residues 448 to 452 (MEARG) form a 1-7; approximate repeat. A 1-8; approximate repeat occupies 453-457 (MDARG). The stretch at 458–462 (LEMRG) is one 1-9; approximate repeat. Tandem repeats lie at residues 505–509 (GAGMQ), 510–514 (GTGIQ), 515–519 (GTGMQ), and 520–524 (GAGIQ). Positions 505–549 (GAGMQGTGIQGTGMQGAGIQGGGMQGAGIQGVSIQGGGIQGGGIQ) are 9 X 5 AA tandem repeats of G-[AT]-G-[MI]-Q. The stretch at 525 to 529 (GGGMQ) is one 2-5; approximate repeat. A 2-6 repeat occupies 530–534 (GAGIQ). One copy of the 2-7; approximate repeat lies at 535 to 539 (GVSIQ). One copy of the 2-8; approximate repeat lies at 540–544 (GGGIQ). The tract at residues 542-573 (GIQGGGIQGASKQGGSQPSSFSPGQSQVTPQD) is disordered. A 2-9; approximate repeat occupies 545 to 549 (GGGIQ). Positions 550–568 (GASKQGGSQPSSFSPGQSQ) are enriched in low complexity. The residue at position 563 (Ser563) is a Phosphoserine.

Its subcellular location is the nucleus. Its function is as follows. May play a significant role in AAUAAA-independent mRNA polyadenylation in germ cells. Directly involved in the binding to pre-mRNAs. This is Cleavage stimulation factor subunit 2 tau variant (CSTF2T) from Homo sapiens (Human).